The following is a 224-amino-acid chain: N-(5'-phosphoribosyl)anthranilate isomerase (224 aa).

Belongs to the TrpF family.

The enzyme catalyses N-(5-phospho-beta-D-ribosyl)anthranilate = 1-(2-carboxyphenylamino)-1-deoxy-D-ribulose 5-phosphate. The protein operates within amino-acid biosynthesis; L-tryptophan biosynthesis; L-tryptophan from chorismate: step 3/5. The sequence is that of N-(5'-phosphoribosyl)anthranilate isomerase from Allorhizobium ampelinum (strain ATCC BAA-846 / DSM 112012 / S4) (Agrobacterium vitis (strain S4)).